Consider the following 345-residue polypeptide: Phenylalanine--tRNA ligase alpha subunit (345 aa).

Position 272 (Glu-272) interacts with Mg(2+).

Belongs to the class-II aminoacyl-tRNA synthetase family. Phe-tRNA synthetase alpha subunit type 1 subfamily. In terms of assembly, tetramer of two alpha and two beta subunits. Mg(2+) is required as a cofactor.

It is found in the cytoplasm. It carries out the reaction tRNA(Phe) + L-phenylalanine + ATP = L-phenylalanyl-tRNA(Phe) + AMP + diphosphate + H(+). The sequence is that of Phenylalanine--tRNA ligase alpha subunit from Prochlorococcus marinus (strain MIT 9312).